The following is a 556-amino-acid chain: Formate--tetrahydrofolate ligase (556 aa).

65 to 72 (TPAGEGKT) contributes to the ATP binding site.

This sequence belongs to the formate--tetrahydrofolate ligase family.

The catalysed reaction is (6S)-5,6,7,8-tetrahydrofolate + formate + ATP = (6R)-10-formyltetrahydrofolate + ADP + phosphate. The protein operates within one-carbon metabolism; tetrahydrofolate interconversion. The chain is Formate--tetrahydrofolate ligase from Carboxydothermus hydrogenoformans (strain ATCC BAA-161 / DSM 6008 / Z-2901).